Here is a 204-residue protein sequence, read N- to C-terminus: Histidine biosynthesis bifunctional protein HisIE (204 aa).

Residues M1–F114 form a phosphoribosyl-AMP cyclohydrolase region. Residues L115–K204 are phosphoribosyl-ATP pyrophosphohydrolase.

The protein in the N-terminal section; belongs to the PRA-CH family. This sequence in the C-terminal section; belongs to the PRA-PH family.

The protein localises to the cytoplasm. It carries out the reaction 1-(5-phospho-beta-D-ribosyl)-ATP + H2O = 1-(5-phospho-beta-D-ribosyl)-5'-AMP + diphosphate + H(+). It catalyses the reaction 1-(5-phospho-beta-D-ribosyl)-5'-AMP + H2O = 1-(5-phospho-beta-D-ribosyl)-5-[(5-phospho-beta-D-ribosylamino)methylideneamino]imidazole-4-carboxamide. It functions in the pathway amino-acid biosynthesis; L-histidine biosynthesis; L-histidine from 5-phospho-alpha-D-ribose 1-diphosphate: step 2/9. It participates in amino-acid biosynthesis; L-histidine biosynthesis; L-histidine from 5-phospho-alpha-D-ribose 1-diphosphate: step 3/9. In Yersinia pestis, this protein is Histidine biosynthesis bifunctional protein HisIE (hisI).